A 408-amino-acid chain; its full sequence is Peptidase T (408 aa).

H78 contributes to the Zn(2+) binding site. The active site involves D80. D141 contributes to the Zn(2+) binding site. E175 functions as the Proton acceptor in the catalytic mechanism. Zn(2+) contacts are provided by E176, D198, and H380.

The protein belongs to the peptidase M20B family. Requires Zn(2+) as cofactor.

Its subcellular location is the cytoplasm. The enzyme catalyses Release of the N-terminal residue from a tripeptide.. Cleaves the N-terminal amino acid of tripeptides. This chain is Peptidase T, found in Clostridium acetobutylicum (strain ATCC 824 / DSM 792 / JCM 1419 / IAM 19013 / LMG 5710 / NBRC 13948 / NRRL B-527 / VKM B-1787 / 2291 / W).